The chain runs to 283 residues: Bifunctional protein FolD 2 (283 aa).

NADP(+) contacts are provided by residues 165–167 (GRG), Thr192, and Val233.

The protein belongs to the tetrahydrofolate dehydrogenase/cyclohydrolase family. In terms of assembly, homodimer.

The catalysed reaction is (6R)-5,10-methylene-5,6,7,8-tetrahydrofolate + NADP(+) = (6R)-5,10-methenyltetrahydrofolate + NADPH. The enzyme catalyses (6R)-5,10-methenyltetrahydrofolate + H2O = (6R)-10-formyltetrahydrofolate + H(+). It participates in one-carbon metabolism; tetrahydrofolate interconversion. Its function is as follows. Catalyzes the oxidation of 5,10-methylenetetrahydrofolate to 5,10-methenyltetrahydrofolate and then the hydrolysis of 5,10-methenyltetrahydrofolate to 10-formyltetrahydrofolate. This chain is Bifunctional protein FolD 2, found in Saccharopolyspora erythraea (strain ATCC 11635 / DSM 40517 / JCM 4748 / NBRC 13426 / NCIMB 8594 / NRRL 2338).